Reading from the N-terminus, the 314-residue chain is Inosine-uridine preferring nucleoside hydrolase (314 aa).

Aspartate 10 contributes to the Ca(2+) binding site. Aspartate 14 provides a ligand contact to substrate. Ca(2+)-binding residues include aspartate 15 and threonine 126. 3 residues coordinate substrate: asparagine 160, glutamate 166, and asparagine 168. Catalysis depends on histidine 240, which acts as the Proton donor. Residue aspartate 241 participates in Ca(2+) binding.

It belongs to the IUNH family. As to quaternary structure, homotetramer. Requires Ca(2+) as cofactor.

It carries out the reaction inosine + H2O = hypoxanthine + D-ribose. The catalysed reaction is uridine + H2O = D-ribose + uracil. The protein operates within purine metabolism; purine nucleoside salvage. Is potently inhibited by immucillin A and immucillin ACAP, which are transition state inhibitors. In terms of biological role, catalyzes the hydrolysis of the N-glycosidic bond of all of the commonly occurring purine and pyrimidine nucleosides into ribose and the associated base, but has a preference for inosine and uridine as substrates. Likely functions in purine salvage from the host, a fundamental pathway since protozoan parasites such as L.major are incapable of de novo purine biosynthesis. The chain is Inosine-uridine preferring nucleoside hydrolase (NSNH) from Leishmania major.